A 169-amino-acid polypeptide reads, in one-letter code: Ureidoglycolate lyase (169 aa).

This sequence belongs to the ureidoglycolate lyase family. In terms of assembly, homodimer. Requires Ni(2+) as cofactor.

It carries out the reaction (S)-ureidoglycolate = urea + glyoxylate. Its pathway is nitrogen metabolism; (S)-allantoin degradation. Catalyzes the catabolism of the allantoin degradation intermediate (S)-ureidoglycolate, generating urea and glyoxylate. Involved in the utilization of allantoin as nitrogen source. This chain is Ureidoglycolate lyase, found in Brucella melitensis biotype 2 (strain ATCC 23457).